A 135-amino-acid polypeptide reads, in one-letter code: VapC ribonuclease aq_1901 (135 aa).

Positions 3-130 (LLDTTVLLDF…FKKLGFKTVN (128 aa)) constitute a PINc domain. Asp5 provides a ligand contact to Mg(2+).

Belongs to the PINc/VapC protein family. It depends on Mg(2+) as a cofactor.

Toxic component of a type II toxin-antitoxin (TA) system. An RNase. The sequence is that of VapC ribonuclease aq_1901 from Aquifex aeolicus (strain VF5).